The chain runs to 233 residues: 27 kDa hemolymph glycoprotein (233 aa).

A signal peptide spans 1 to 17 (MIWKTLIVAFMATAVLA). 2 N-linked (GlcNAc...) asparagine glycosylation sites follow: Asn125 and Asn156.

This sequence belongs to the UPF0408 family. Post-translationally, N-glycosylated. As to expression, hemolymph.

The protein resides in the secreted. The chain is 27 kDa hemolymph glycoprotein from Manduca sexta (Tobacco hawkmoth).